The following is a 550-amino-acid chain: Acetyl-coenzyme A transporter 1 (550 aa).

2 stretches are compositionally biased toward basic and acidic residues: residues 1–12 and 36–52; these read MSPTISHKDSSR and DDSR…REVL. A disordered region spans residues 1-58; sequence MSPTISHKDSSRQRRSGMFSHALDMKSGPLPPGGWDDSRRDSVGGEGDREVLLGDAGP. The Cytoplasmic portion of the chain corresponds to 1–74; sequence MSPTISHKDS…PRSYRSELSS (74 aa). S42 bears the Phosphoserine mark. A helical membrane pass occupies residues 75–95; it reads ILLLLFLYVLQGIPLGLAGSI. Residues 96–113 lie on the Extracellular side of the membrane; it reads PLILQSKNVSYTDQAFFS. N-linked (GlcNAc...) asparagine glycosylation is present at N103. Residues 114-134 traverse the membrane as a helical segment; the sequence is FVFWPFSLKLLWAPLVDAVYF. The Cytoplasmic portion of the chain corresponds to 135-141; the sequence is KNFGRRK. Residues 142 to 162 traverse the membrane as a helical segment; it reads SWLVPTQYTLGIFMIYLSTQV. The Extracellular segment spans residues 163-175; the sequence is DRLLGNIDGRTPD. Residues 176–196 form a helical membrane-spanning segment; that stretch reads VVALTVTFFLFEFLAATQDIA. Residues 197 to 217 lie on the Cytoplasmic side of the membrane; sequence VDGWALTMLSRENVGYASTCN. Residues 218–238 traverse the membrane as a helical segment; that stretch reads SVGQTAGYFLGNVLFLALESA. Residues 239–256 are Extracellular-facing; sequence DFCNKYLRFQPQPRGIVT. The helical transmembrane segment at 257–277 threads the bilayer; the sequence is LSDFLFFWGTVFLITTTLVAL. The Cytoplasmic segment spans residues 278 to 300; it reads LKKENREASIVKEETQGITDTYK. The helical transmembrane segment at 301–321 threads the bilayer; that stretch reads LLFSIIKMPAVLAFCLLILTS. Residues 322-344 lie on the Extracellular side of the membrane; that stretch reads KIGFSAADAVTGLKLVEEGVPKE. The chain crosses the membrane as a helical span at residues 345–365; that stretch reads HLALLAVPMVPLQIILPLLIS. The Cytoplasmic segment spans residues 366–375; that stretch reads KYTAGPQPLN. The helical transmembrane segment at 376–396 threads the bilayer; that stretch reads IFYKAMPYRLLLGLEYALLVW. At 397–405 the chain is on the extracellular side; that stretch reads WTPKVEHQG. A helical membrane pass occupies residues 406 to 426; sequence GFPLYYYIIVLLSYALHQVTL. At 427 to 509 the chain is on the cytoplasmic side; it reads YSMYVSIMAF…LGGSCVTALD (83 aa). The chain crosses the membrane as a helical span at residues 510-530; that stretch reads GYYVESIICVLIGFGWWFFLG. Residues 531-550 are Extracellular-facing; the sequence is PKFKKLQDEGPSSWKCKRNN.

It belongs to the SLC33A transporter family. In terms of assembly, homodimerizes. Expressed in all adult tissues examined including brain, heart, kidney, liver and spleen, with maximum expression in liver and kidney.

It is found in the endoplasmic reticulum membrane. It carries out the reaction acetyl-CoA(in) = acetyl-CoA(out). Its function is as follows. Acetyl-CoA transporter that mediates active acetyl-CoA import through the endoplasmic reticulum (ER) membrane into the ER lumen where specific ER-based acetyl-CoA:lysine acetyltransferases are responsible for the acetylation of ER-based protein substrate, such as BACE1. Necessary for O-acetylation of gangliosides. This chain is Acetyl-coenzyme A transporter 1 (Slc33a1), found in Mus musculus (Mouse).